The chain runs to 129 residues: Small ribosomal subunit protein uS11 (129 aa).

Belongs to the universal ribosomal protein uS11 family. In terms of assembly, part of the 30S ribosomal subunit. Interacts with proteins S7 and S18. Binds to IF-3.

Located on the platform of the 30S subunit, it bridges several disparate RNA helices of the 16S rRNA. Forms part of the Shine-Dalgarno cleft in the 70S ribosome. This Chelativorans sp. (strain BNC1) protein is Small ribosomal subunit protein uS11.